The primary structure comprises 372 residues: Queuine tRNA-ribosyltransferase (372 aa).

Asp-89 (proton acceptor) is an active-site residue. Substrate is bound by residues 89–93 (DSGGF), Asp-161, and Gly-232. Residues 262–268 (GIGDLPS) are RNA binding. The active-site Nucleophile is Asp-281. Positions 286-290 (TKAAR) are RNA binding; important for wobble base 34 recognition. The Zn(2+) site is built by Cys-319, Cys-321, Cys-324, and His-351.

This sequence belongs to the queuine tRNA-ribosyltransferase family. Homodimer. Within each dimer, one monomer is responsible for RNA recognition and catalysis, while the other monomer binds to the replacement base PreQ1. The cofactor is Zn(2+).

It catalyses the reaction 7-aminomethyl-7-carbaguanine + guanosine(34) in tRNA = 7-aminomethyl-7-carbaguanosine(34) in tRNA + guanine. It functions in the pathway tRNA modification; tRNA-queuosine biosynthesis. Its function is as follows. Catalyzes the base-exchange of a guanine (G) residue with the queuine precursor 7-aminomethyl-7-deazaguanine (PreQ1) at position 34 (anticodon wobble position) in tRNAs with GU(N) anticodons (tRNA-Asp, -Asn, -His and -Tyr). Catalysis occurs through a double-displacement mechanism. The nucleophile active site attacks the C1' of nucleotide 34 to detach the guanine base from the RNA, forming a covalent enzyme-RNA intermediate. The proton acceptor active site deprotonates the incoming PreQ1, allowing a nucleophilic attack on the C1' of the ribose to form the product. After dissociation, two additional enzymatic reactions on the tRNA convert PreQ1 to queuine (Q), resulting in the hypermodified nucleoside queuosine (7-(((4,5-cis-dihydroxy-2-cyclopenten-1-yl)amino)methyl)-7-deazaguanosine). The sequence is that of Queuine tRNA-ribosyltransferase from Chlamydia felis (strain Fe/C-56) (Chlamydophila felis).